The primary structure comprises 267 residues: Putative hydro-lyase Arth_3576 (267 aa).

It belongs to the D-glutamate cyclase family.

The chain is Putative hydro-lyase Arth_3576 from Arthrobacter sp. (strain FB24).